Here is a 188-residue protein sequence, read N- to C-terminus: Pro-adrenomedullin (188 aa).

Residues 1–21 (MKLVPVALLYLGSLAFLGADT) form the signal peptide. Position 41 is an arginine amide (Arg-41). The propeptide occupies 45–92 (ELRVSSSYPTGLAEVKAGPAQTLIRTQDVKGASRNPQTSGPDAARIRV). A disulfide bridge links Cys-110 with Cys-115. The tract at residues 131 to 176 (DKDGVAPRSKISPQGYGRRRRRSLPEPGLRRTLLFPEPRPGGAPAP) is disordered. Tyr-146 is subject to Tyrosine amide. Residues 153–188 (SLPEPGLRRTLLFPEPRPGGAPAPRAHQVLANLLKM) constitute a propeptide, preproAM C-terminal fragment.

Belongs to the adrenomedullin family.

The protein resides in the secreted. Functionally, adrenomedullin/ADM and proadrenomedullin N-20 terminal peptide/PAMP are peptide hormones that act as potent hypotensive and vasodilatator agents. Numerous actions have been reported most related to the physiologic control of fluid and electrolyte homeostasis. ADM function is mediated by the CALCRL-RAMP2 and CALCRL-RAMP3 receptor complexes with ADM showing the highest potency for the CALCRL-RAMP2 complex. This is Pro-adrenomedullin (ADM) from Canis lupus familiaris (Dog).